The sequence spans 237 residues: Cysteine-rich venom protein DIS3 (237 aa).

The first 18 residues, 1–18 (MFVFILLSLAAVLQQSFG), serve as a signal peptide directing secretion. The region spanning 37-165 (VDKHNAFRRS…SYDYFYVCQY (129 aa)) is the SCP domain. Cystine bridges form between cysteine 74–cysteine 152, cysteine 91–cysteine 166, cysteine 147–cysteine 163, cysteine 185–cysteine 192, cysteine 188–cysteine 197, cysteine 201–cysteine 234, and cysteine 219–cysteine 232. Positions 201 to 234 (CSREDVFTNCKSLVAKSNCQDDYIRKNCLATCFC) constitute a ShKT domain.

It belongs to the CRISP family. As to expression, expressed by the venom gland.

The protein resides in the secreted. Its function is as follows. Weakly blocks contraction of smooth muscle elicited by high potassium-induced depolarization, but does not block caffeine-stimulated contraction. May target voltage-gated calcium channels on smooth muscle. This Dispholidus typus (Boomslang) protein is Cysteine-rich venom protein DIS3.